The sequence spans 453 residues: Chromosomal replication initiator protein DnaA (453 aa).

Residues 1–79 (MKSLIQEKWN…KTAIAEVINQ (79 aa)) are domain I, interacts with DnaA modulators. Residues 79–111 (QDFEIEFVLLSQTKAEEKVQTQAPNKIKNESLS) form a domain II region. A domain III, AAA+ region region spans residues 112-330 (YLNPRYTFDT…GALTKIVALS (219 aa)). ATP contacts are provided by Gly-156, Gly-158, Lys-159, and Thr-160. Positions 331-453 (RLKKKEVDVI…VLIKKINPTP (123 aa)) are domain IV, binds dsDNA.

It belongs to the DnaA family. As to quaternary structure, oligomerizes as a right-handed, spiral filament on DNA at oriC.

It localises to the cytoplasm. Plays an essential role in the initiation and regulation of chromosomal replication. ATP-DnaA binds to the origin of replication (oriC) to initiate formation of the DNA replication initiation complex once per cell cycle. Binds the DnaA box (a 9 base pair repeat at the origin) and separates the double-stranded (ds)DNA. Forms a right-handed helical filament on oriC DNA; dsDNA binds to the exterior of the filament while single-stranded (ss)DNA is stabiized in the filament's interior. The ATP-DnaA-oriC complex binds and stabilizes one strand of the AT-rich DNA unwinding element (DUE), permitting loading of DNA polymerase. After initiation quickly degrades to an ADP-DnaA complex that is not apt for DNA replication. Binds acidic phospholipids. This chain is Chromosomal replication initiator protein DnaA, found in Lachnoclostridium phytofermentans (strain ATCC 700394 / DSM 18823 / ISDg) (Clostridium phytofermentans).